A 199-amino-acid chain; its full sequence is MITFTKPLSKLIGHFEKFPGIGPRTAQRLALFILKQPESSIRDFSKALLEAHSNVGHCKKCFNLTSEEECEICRNTERNQKIICVVAETKDLLALERSREFKGTYHVIGGLISPMDSISPELLEIRSLVERVSKSDIDEIILALTPSVEGDTTSLYIGKLLTPFTKVTRIAYGLPMGSELEYVDEVTLARALEGRTNLI.

Residues 58 to 73 (CKKCFNLTSEEECEIC) form a C4-type zinc finger. Positions 81-175 (KIICVVAETK…KVTRIAYGLP (95 aa)) constitute a Toprim domain.

It belongs to the RecR family.

Functionally, may play a role in DNA repair. It seems to be involved in an RecBC-independent recombinational process of DNA repair. It may act with RecF and RecO. The polypeptide is Recombination protein RecR (Prochlorococcus marinus subsp. pastoris (strain CCMP1986 / NIES-2087 / MED4)).